An 89-amino-acid chain; its full sequence is MAISKEKKNEIIAQYARHEGDTGSVEVQVAVLTWEINHLNDHIKQHKKDHATYRGLMKKIGRRRNLLAYLRKNDVNRYRELINSLGLRR.

This sequence belongs to the universal ribosomal protein uS15 family. Part of the 30S ribosomal subunit. Forms a bridge to the 50S subunit in the 70S ribosome, contacting the 23S rRNA.

In terms of biological role, one of the primary rRNA binding proteins, it binds directly to 16S rRNA where it helps nucleate assembly of the platform of the 30S subunit by binding and bridging several RNA helices of the 16S rRNA. Its function is as follows. Forms an intersubunit bridge (bridge B4) with the 23S rRNA of the 50S subunit in the ribosome. The polypeptide is Small ribosomal subunit protein uS15 (Streptococcus gordonii (strain Challis / ATCC 35105 / BCRC 15272 / CH1 / DL1 / V288)).